Consider the following 194-residue polypeptide: Interleukin-18 (194 aa).

A propeptide spanning residues 1 to 36 (MAAMSEEGSCVNFKEMMFIDNTLYLIPEDNGDLESD) is cleaved from the precursor.

Belongs to the IL-1 family. As to quaternary structure, forms a ternary complex with ligand-binding receptor subunit IL18R1 and signaling receptor subunit IL18RAP at the plasma membrane. Mature IL18 first binds to IL18R1 forming a low affinity binary complex, which then interacts with IL18RAP to form a high affinity ternary complex that signals inside the cell. Interacts with cargo receptor TMED10; the interaction mediates the translocation from the cytoplasm into the ERGIC (endoplasmic reticulum-Golgi intermediate compartment) and thereby secretion. The pro-IL-18 precursor is processed by CASP1 to yield its mature, active form. The pro-IL-18 precursor is however not processed by Casp4/Casp11 in rodents. The pro-IL-18 precursor features autoinhibitory interactions between the propeptide and the post-cleavage-site region, preventing recognition by the IL18R1 receptor. Processing by CASP1 induces conformational changes to generate critical receptor-binding sites. The mature form is then secreted and released in the extracellular milieu by passing through the gasdermin-D (GSDMD) pore. In contrast, cleavage by CASP3 inactivates IL18.

It localises to the cytoplasm. The protein localises to the cytosol. The protein resides in the secreted. Its function is as follows. Pro-inflammatory cytokine primarily involved in epithelial barrier repair, polarized T-helper 1 (Th1) cell and natural killer (NK) cell immune responses. Upon binding to IL18R1 and IL18RAP, forms a signaling ternary complex which activates NF-kappa-B, triggering synthesis of inflammatory mediators. Synergizes with IL12/interleukin-12 to induce IFNG synthesis from T-helper 1 (Th1) cells and natural killer (NK) cells. Involved in transduction of inflammation downstream of pyroptosis: its mature form is specifically released in the extracellular milieu by passing through the gasdermin-D (GSDMD) pore. This chain is Interleukin-18 (Il18), found in Rattus norvegicus (Rat).